Consider the following 346-residue polypeptide: Elongation factor Ts (346 aa).

The segment at 80-83 (TDFV) is involved in Mg(2+) ion dislocation from EF-Tu.

It belongs to the EF-Ts family.

Its subcellular location is the cytoplasm. In terms of biological role, associates with the EF-Tu.GDP complex and induces the exchange of GDP to GTP. It remains bound to the aminoacyl-tRNA.EF-Tu.GTP complex up to the GTP hydrolysis stage on the ribosome. This Streptococcus agalactiae serotype Ia (strain ATCC 27591 / A909 / CDC SS700) protein is Elongation factor Ts.